A 309-amino-acid polypeptide reads, in one-letter code: Ornithine carbamoyltransferase (309 aa).

Carbamoyl phosphate-binding positions include 51-54 (STRT), Gln78, Arg102, and 129-132 (HPVQ). Residues Asn160, Asp224, and 228 to 229 (SM) contribute to the L-ornithine site. Carbamoyl phosphate-binding positions include 264–265 (CL) and Arg292.

It belongs to the aspartate/ornithine carbamoyltransferase superfamily. OTCase family.

It localises to the cytoplasm. The enzyme catalyses carbamoyl phosphate + L-ornithine = L-citrulline + phosphate + H(+). The protein operates within amino-acid biosynthesis; L-arginine biosynthesis; L-arginine from L-ornithine and carbamoyl phosphate: step 1/3. Its function is as follows. Reversibly catalyzes the transfer of the carbamoyl group from carbamoyl phosphate (CP) to the N(epsilon) atom of ornithine (ORN) to produce L-citrulline. This chain is Ornithine carbamoyltransferase, found in Campylobacter fetus subsp. fetus (strain 82-40).